The sequence spans 107 residues: HTH-type transcriptional regulator Rv2034 (107 aa).

An HTH arsR-type domain is found at 1–93 (MSTYRSPDRA…DLDRFWTRAL (93 aa)). The segment at residues 33 to 56 (VGELARDLPVSRPAVSQHLKVLKT) is a DNA-binding region (H-T-H motif).

Homodimer.

DNA-binding ability is not susceptible to zinc, nickel, cobalt, cadmium, lead, copper and manganese ions. In terms of biological role, involved in the regulation of lipid metabolism and hypoxic response. Positively regulates transcription of various genes, such as phoP, groEL2 and dosR. Negatively regulates its own transcription. Acts by binding to a specific palindromic sequence motif in promoter regions. This chain is HTH-type transcriptional regulator Rv2034, found in Mycobacterium tuberculosis (strain ATCC 25618 / H37Rv).